Here is a 222-residue protein sequence, read N- to C-terminus: Germin-like protein subfamily 1 member 16 (222 aa).

The N-terminal stretch at 1-22 (MRVSQSLIPFAIIALVLSFVNA) is a signal peptide. A disulfide bridge connects residues cysteine 32 and cysteine 48. In terms of domain architecture, Cupin type-1 spans 62–213 (SGLNVPGNTN…AFQLDANVVK (152 aa)). N-linked (GlcNAc...) asparagine glycosylation is present at asparagine 77. Mn(2+) is bound by residues histidine 110, histidine 112, glutamate 117, and histidine 159.

This sequence belongs to the germin family. As to quaternary structure, oligomer (believed to be a pentamer but probably hexamer).

The protein resides in the secreted. Its subcellular location is the extracellular space. It localises to the apoplast. Its function is as follows. May play a role in plant defense. Probably has no oxalate oxidase activity even if the active site is conserved. The protein is Germin-like protein subfamily 1 member 16 of Arabidopsis thaliana (Mouse-ear cress).